The following is a 231-amino-acid chain: Phosphatidylserine decarboxylase proenzyme (231 aa).

S188 functions as the Schiff-base intermediate with substrate; via pyruvic acid in the catalytic mechanism. Pyruvic acid (Ser); by autocatalysis is present on S188.

The protein belongs to the phosphatidylserine decarboxylase family. PSD-A subfamily. In terms of assembly, heterodimer of a large membrane-associated beta subunit and a small pyruvoyl-containing alpha subunit. Requires pyruvate as cofactor. Post-translationally, is synthesized initially as an inactive proenzyme. Formation of the active enzyme involves a self-maturation process in which the active site pyruvoyl group is generated from an internal serine residue via an autocatalytic post-translational modification. Two non-identical subunits are generated from the proenzyme in this reaction, and the pyruvate is formed at the N-terminus of the alpha chain, which is derived from the carboxyl end of the proenzyme. The post-translation cleavage follows an unusual pathway, termed non-hydrolytic serinolysis, in which the side chain hydroxyl group of the serine supplies its oxygen atom to form the C-terminus of the beta chain, while the remainder of the serine residue undergoes an oxidative deamination to produce ammonia and the pyruvoyl prosthetic group on the alpha chain.

The protein localises to the cell membrane. It catalyses the reaction a 1,2-diacyl-sn-glycero-3-phospho-L-serine + H(+) = a 1,2-diacyl-sn-glycero-3-phosphoethanolamine + CO2. The protein operates within phospholipid metabolism; phosphatidylethanolamine biosynthesis; phosphatidylethanolamine from CDP-diacylglycerol: step 2/2. In terms of biological role, catalyzes the formation of phosphatidylethanolamine (PtdEtn) from phosphatidylserine (PtdSer). In Rickettsia felis (strain ATCC VR-1525 / URRWXCal2) (Rickettsia azadi), this protein is Phosphatidylserine decarboxylase proenzyme.